A 232-amino-acid polypeptide reads, in one-letter code: Dof zinc finger protein DOF4.3 (232 aa).

The segment at Arg25–Thr79 adopts a Dof-type zinc-finger fold. Zn(2+)-binding residues include Cys27, Cys30, Cys52, and Cys55.

It localises to the nucleus. Transcription factor that binds specifically to a 5'-AA[AG]G-3' consensus core sequence. This chain is Dof zinc finger protein DOF4.3 (DOF4.3), found in Arabidopsis thaliana (Mouse-ear cress).